The chain runs to 1045 residues: B3 domain-containing protein REM13 (1045 aa).

The segment at residues 7 to 96 (YPQFFHTLVP…VFHVSNLGPN (90 aa)) is a DNA-binding region (TF-B3 1). The tract at residues 121-147 (NNGDVCDSEELPKEKKAKTNSEEADAV) is disordered. Residues 130–141 (ELPKEKKAKTNS) show a composition bias toward basic and acidic residues. 2 DNA-binding regions (TF-B3) span residues 157–253 (CFMA…FCPT) and 305–398 (FVTF…CSPE). Residues 423–449 (NRDKISNNDKEENMSWERKKDHLKSRD) are disordered. The segment at residues 474-570 (SNDSCLVVVS…TPVLSLCPAD (97 aa)) is a DNA-binding region (TF-B3 4). The disordered stretch occupies residues 606 to 625 (IKDDNSKEKNDKEESKSVDG). DNA-binding regions (TF-B3) lie at residues 643–738 (FVTL…LRTE), 815–910 (FVTF…LRTK), and 940–1035 (FVTL…LKFS).

The protein localises to the nucleus. The polypeptide is B3 domain-containing protein REM13 (REM13) (Arabidopsis thaliana (Mouse-ear cress)).